We begin with the raw amino-acid sequence, 359 residues long: NAC domain-containing protein 45 (359 aa).

The NAC domain maps to 19–185 (LPPGFRFHPT…EWVVCKVFHK (167 aa)). The DNA-binding element occupies 130–191 (VGMKKTLVFY…VFHKKGDDRE (62 aa)).

In terms of tissue distribution, expressed in roots. Expressed at low levels in leaves, stems and panicles.

Its subcellular location is the nucleus. Transcription activator involved in responses to drought stress and salt stress. Transactivates the stress response genes LEA19 and PM19L. The chain is NAC domain-containing protein 45 from Oryza sativa subsp. japonica (Rice).